The sequence spans 380 residues: Cytochrome b (380 aa).

The next 4 membrane-spanning stretches (helical) occupy residues F33–M53, W77–I98, W113–L133, and F178–F198. Heme b-binding residues include H83 and H97. Residues H182 and H196 each coordinate heme b. H201 lines the a ubiquinone pocket. Helical transmembrane passes span Y226–S246, L288–H308, L320–G340, and F347–P367.

It belongs to the cytochrome b family. In terms of assembly, the cytochrome bc1 complex contains 3 respiratory subunits (MT-CYB, CYC1 and UQCRFS1), 2 core proteins (UQCRC1 and UQCRC2) and probably 6 low-molecular weight proteins. Heme b is required as a cofactor.

The protein localises to the mitochondrion inner membrane. Component of the ubiquinol-cytochrome c reductase complex (complex III or cytochrome b-c1 complex) that is part of the mitochondrial respiratory chain. The b-c1 complex mediates electron transfer from ubiquinol to cytochrome c. Contributes to the generation of a proton gradient across the mitochondrial membrane that is then used for ATP synthesis. This Zenopsis nebulosa (Mirror dory) protein is Cytochrome b (mt-cyb).